A 337-amino-acid polypeptide reads, in one-letter code: Oxidoreductase andH (337 aa).

It belongs to the NmrA-type oxidoreductase family.

It participates in secondary metabolite biosynthesis; terpenoid biosynthesis. Oxidoreductase; part of the gene cluster that mediates the biosynthesis of anditomin, a fungal meroterpenoid. The first step of the pathway is the synthesis of 3,5-dimethylorsellinic acid (DMOA) by the polyketide synthase andM. DMOA is then converted to the phthalide compound 5,7-dihydroxy-4,6-dimethylphthalide (DHDMP) by the cytochrome P450 monooxygenase andK, which is further prenylated by the prenyltransferase andD to yield farnesyl-DHDMP. Further epoxidation by the FAD-dependent monooxygenase andE leads to epoxyfarnesyl-DHDMP. The next step involves the terpene cyclase andB that converts epoxyfarnesyl-DHDMP into preandiloid A through opening of the epoxide ring followed by the cyclization of the farnesyl moiety. Preandiloid A is in turn oxidized at the C-3 hydroxyl group to yield preandiloid B by the dehydrogenase andC. The dioxygenase andA is solely responsible for the dehydrogenation of preandiloid B leading to the enone preandiloid C, as well as for the intriguing structural rearrangement to generate the bicyclo[2.2.2]octane core, transforming preandiloid C into andiconin. FAD-binding monooxygenase andJ then produces andilesin D which is reduced by dehydrogenase andI to yield andilesin A. Action of acetyltransferase andG followed by a spontaneous acetate elimination leads then to andilesin B, which is in turn substrate of the short chain dehydrogenase andH to yield andilesin C. Finally, the dioxygenase andF catalyzes the transformation of andilesin C to anditomin. This Emericella variicolor (Aspergillus stellatus) protein is Oxidoreductase andH.